A 961-amino-acid polypeptide reads, in one-letter code: Mitogen-activated protein kinase kinase kinase 13-A (961 aa).

Positions 88–118 (LRDQDEPENTAPQGSSHSGDGGSYSGNEDIR) are disordered. The Protein kinase domain occupies 169–410 (ISELQWLGSG…FRQILMHLDI (242 aa)). ATP is bound by residues 175 to 183 (LGSGAQGAV) and Lys-196. Asp-280 serves as the catalytic Proton acceptor. Leucine-zipper regions lie at residues 434–455 (VKKHFEKIKSEGTCIHRLDEEL) and 487–508 (LSAIMLQLEVREKELIRREQAV). Residues 458-497 (RRREELRHALDIREHYERKLERANNLYMELSAIMLQLEVR) are a coiled coil. Disordered stretches follow at residues 513-600 (PGTY…SKGS), 615-637 (ALSQQSSQHQTLASPPVTSCSPY), and 799-883 (RRIR…KLDD). Residues 560–578 (SAEGSAASASPISGSPKTS) show a composition bias toward low complexity. The span at 584-596 (NRYRSKPRHRRVN) shows a compositional bias: basic residues. Over residues 810–823 (ESSEEEEGEVDSEV) the composition is skewed to acidic residues. The interval 811–824 (SSEEEEGEVDSEVE) is acidic. Residues 837 to 851 (KCQSYSTFSSENFSV) show a composition bias toward polar residues.

Belongs to the protein kinase superfamily. Ser/Thr protein kinase family.

It is found in the cytoplasm. Its subcellular location is the membrane. The catalysed reaction is L-seryl-[protein] + ATP = O-phospho-L-seryl-[protein] + ADP + H(+). It carries out the reaction L-threonyl-[protein] + ATP = O-phospho-L-threonyl-[protein] + ADP + H(+). May have a role in the JNK signaling pathway. The protein is Mitogen-activated protein kinase kinase kinase 13-A (map3k13-a) of Xenopus laevis (African clawed frog).